The chain runs to 230 residues: MKIGIIGAMEPEVVHLVQAIVDPVHTTIAGIEFISGSIAGKDVVVTRSGIGKVAASIATTLLIEKFAATHVINTGSAGGFVDSLAIGDIVISSEVRHHDVDVTAFGYEIGQMAQQPAAFMPDSTLVNAAKSAVAELGEVKAIEGLICTGDSFICDPVRTKVMRENFPTMAACEMEGAAIAQVCHQFNVPFVVIRSLSDNANNDSPVDFDSYIIKAGMHSAMMVIALLQQL.

E12 acts as the Proton acceptor in catalysis. Residues G78, I153, and 174–175 contribute to the substrate site; that span reads ME. Residue D198 is the Proton donor of the active site.

Belongs to the PNP/UDP phosphorylase family. MtnN subfamily.

It carries out the reaction S-adenosyl-L-homocysteine + H2O = S-(5-deoxy-D-ribos-5-yl)-L-homocysteine + adenine. The enzyme catalyses S-methyl-5'-thioadenosine + H2O = 5-(methylsulfanyl)-D-ribose + adenine. The catalysed reaction is 5'-deoxyadenosine + H2O = 5-deoxy-D-ribose + adenine. It functions in the pathway amino-acid biosynthesis; L-methionine biosynthesis via salvage pathway; S-methyl-5-thio-alpha-D-ribose 1-phosphate from S-methyl-5'-thioadenosine (hydrolase route): step 1/2. In terms of biological role, catalyzes the irreversible cleavage of the glycosidic bond in both 5'-methylthioadenosine (MTA) and S-adenosylhomocysteine (SAH/AdoHcy) to adenine and the corresponding thioribose, 5'-methylthioribose and S-ribosylhomocysteine, respectively. Also cleaves 5'-deoxyadenosine, a toxic by-product of radical S-adenosylmethionine (SAM) enzymes, into 5-deoxyribose and adenine. This chain is 5'-methylthioadenosine/S-adenosylhomocysteine nucleosidase, found in Shewanella frigidimarina (strain NCIMB 400).